The sequence spans 180 residues: MQAEGRGTGGSTGDADGPGGPGIPDGPGGNAGGPGEAGATGGRGPRGAGAARASGPGGGAPRGPHGGAASGLNGCCRCGARGPESRLLEFYLAMPFATPMEAELARRSLAQDAPPLPVPGVLLKEFTVSGNILTIRLTAADHRQLQLSISSCLQQLSLLMWITQCFLPVFLAQPPSGQRR.

Gly residues-rich tracts occupy residues 1–47 (MQAE…GPRG) and 55–66 (GPGGGAPRGPHG). Residues 1-66 (MQAEGRGTGG…GGGAPRGPHG (66 aa)) form a disordered region.

The protein belongs to the CTAG/PCC1 family. Expressed in testis and ovary and in a wide variety of cancers. Detected in uterine myometrium. Expressed from 18 weeks until birth in human fetal testis. In the adult testis, is strongly expressed in spermatogonia and in primary spermatocytes, but not in post-meiotic cells or in testicular somatic cells (at protein level).

It localises to the cytoplasm. In Homo sapiens (Human), this protein is Cancer/testis antigen 1 (CTAG1A).